The chain runs to 152 residues: UPF0266 membrane protein YobD (152 aa).

3 helical membrane-spanning segments follow: residues 6–26 (LVLI…QFIM), 45–65 (VDSV…VTSH), and 67–87 (AQMT…IFWI).

The protein belongs to the UPF0266 family.

The protein localises to the cell inner membrane. The chain is UPF0266 membrane protein YobD from Salmonella paratyphi B (strain ATCC BAA-1250 / SPB7).